The primary structure comprises 1372 residues: DNA-directed RNA polymerase subunit beta'' (1372 aa).

Positions 252, 321, 328, and 331 each coordinate Zn(2+).

The protein belongs to the RNA polymerase beta' chain family. RpoC2 subfamily. As to quaternary structure, in plastids the minimal PEP RNA polymerase catalytic core is composed of four subunits: alpha, beta, beta', and beta''. When a (nuclear-encoded) sigma factor is associated with the core the holoenzyme is formed, which can initiate transcription. It depends on Zn(2+) as a cofactor.

It localises to the plastid. The protein localises to the organellar chromatophore. The enzyme catalyses RNA(n) + a ribonucleoside 5'-triphosphate = RNA(n+1) + diphosphate. In terms of biological role, DNA-dependent RNA polymerase catalyzes the transcription of DNA into RNA using the four ribonucleoside triphosphates as substrates. The sequence is that of DNA-directed RNA polymerase subunit beta'' from Paulinella chromatophora.